We begin with the raw amino-acid sequence, 270 residues long: Formamidopyrimidine-DNA glycosylase (270 aa).

The active-site Schiff-base intermediate with DNA is the Pro2. Glu3 (proton donor) is an active-site residue. Lys58 functions as the Proton donor; for beta-elimination activity in the catalytic mechanism. 3 residues coordinate DNA: His91, Arg110, and Arg151. An FPG-type zinc finger spans residues 236–270 (FVYGRGGMPCKLCGTTLREAKLGQRASVYCPRCQR). The active-site Proton donor; for delta-elimination activity is Arg260.

The protein belongs to the FPG family. Monomer. Requires Zn(2+) as cofactor.

It catalyses the reaction Hydrolysis of DNA containing ring-opened 7-methylguanine residues, releasing 2,6-diamino-4-hydroxy-5-(N-methyl)formamidopyrimidine.. It carries out the reaction 2'-deoxyribonucleotide-(2'-deoxyribose 5'-phosphate)-2'-deoxyribonucleotide-DNA = a 3'-end 2'-deoxyribonucleotide-(2,3-dehydro-2,3-deoxyribose 5'-phosphate)-DNA + a 5'-end 5'-phospho-2'-deoxyribonucleoside-DNA + H(+). Involved in base excision repair of DNA damaged by oxidation or by mutagenic agents. Acts as a DNA glycosylase that recognizes and removes damaged bases. Has a preference for oxidized purines, such as 7,8-dihydro-8-oxoguanine (8-oxoG). Has AP (apurinic/apyrimidinic) lyase activity and introduces nicks in the DNA strand. Cleaves the DNA backbone by beta-delta elimination to generate a single-strand break at the site of the removed base with both 3'- and 5'-phosphates. This chain is Formamidopyrimidine-DNA glycosylase, found in Pseudomonas putida (strain W619).